The sequence spans 173 residues: HTH-type transcriptional regulator IscR (173 aa).

Positions 2-131 (RLTSKGRYAV…NNITLGELMM (130 aa)) constitute an HTH rrf2-type domain. The H-T-H motif DNA-binding region spans 28–51 (LADISERQGISLSYLEQLFSKLRK). Positions 92, 98, and 104 each coordinate [2Fe-2S] cluster.

The cofactor is [2Fe-2S] cluster.

Functionally, regulates the transcription of several operons and genes involved in the biogenesis of Fe-S clusters and Fe-S-containing proteins. In Vibrio cholerae serotype O1 (strain ATCC 39315 / El Tor Inaba N16961), this protein is HTH-type transcriptional regulator IscR.